We begin with the raw amino-acid sequence, 180 residues long: uncharacterized protein (180 aa).

Residues 1–21 (MKQCIAFMAILALSLSAISEA) form the signal peptide. Residues 23-81 (GGRGVRSSGYSRPVATKPAPAPKQTQTQQQSQQPDATFGQQNMQNTATNTPNNPNNRLA) form a disordered region. Positions 27–78 (VRSSGYSRPVATKPAPAPKQTQTQQQSQQPDATFGQQNMQNTATNTPNNPNN) are enriched in low complexity.

This is an uncharacterized protein from Pasteurella multocida (strain Pm70).